A 900-amino-acid chain; its full sequence is Vacuolar membrane protein pep3 (900 aa).

The segment at 1–20 (MSLAEDWIDPNSSEDSDIQE) is disordered. TPR repeat units follow at residues 314–345 (HLAFLDLDTLYIVNRVNGKESYQQRVNLSPHE), 373–406 (NNETREASLVFLEKGDFEKALECANTAKVRNTVL), 408–436 (GYAEFLMEHEEYERAATLYAETLKSVEEV), and 546–579 (MKDQSYIMHYWVQRENYEKALETLNEGVSQETLI). One copy of the CHCR repeat lies at 602–756 (DLDVHALIPS…MFSKKSGIKE (155 aa)). The RING-type; atypical zinc finger occupies 837 to 884 (CWHCNQPLFSEPFVLFPCQHAFHRSCMLEKTYKLASEKNILKECQLCG).

The protein belongs to the VPS18 family.

Its subcellular location is the vacuole membrane. In terms of biological role, required for vacuolar biogenesis. This chain is Vacuolar membrane protein pep3 (pep3), found in Schizosaccharomyces pombe (strain 972 / ATCC 24843) (Fission yeast).